The sequence spans 890 residues: ATP-dependent DNA helicase DDX11 (890 aa).

The 421-residue stretch at 4-424 folds into the Helicase ATP-binding domain; that stretch reads KSGRFPFPFQ…KNLMYIKQIL (421 aa). 39 to 46 contributes to the ATP binding site; it reads SPTGTGKS. A compositionally biased stretch (basic and acidic residues) spans 71–85; sequence LLEGQKDSDVVKEKN. Disordered regions lie at residues 71–95 and 176–199; these read LLEG…EPDW and EYES…DDDD. [4Fe-4S] cluster contacts are provided by cysteine 246, cysteine 264, cysteine 294, and cysteine 329. Positions 372-375 match the DEAH box motif; the sequence is DEAH.

Belongs to the DEAD box helicase family. DEAH subfamily. DDX11/CHL1 sub-subfamily. It depends on [4Fe-4S] cluster as a cofactor.

The protein resides in the nucleus. Its subcellular location is the nucleolus. It is found in the cytoplasm. It localises to the cytoskeleton. The protein localises to the spindle pole. The protein resides in the midbody. Its subcellular location is the microtubule organizing center. It is found in the centrosome. It carries out the reaction Couples ATP hydrolysis with the unwinding of duplex DNA at the replication fork by translocating in the 5'-3' direction. This creates two antiparallel DNA single strands (ssDNA). The leading ssDNA polymer is the template for DNA polymerase III holoenzyme which synthesizes a continuous strand.. It catalyses the reaction ATP + H2O = ADP + phosphate + H(+). DNA-dependent ATPase and ATP-dependent DNA helicase that participates in various functions in genomic stability, including DNA replication, DNA repair and heterochromatin organization as well as in ribosomal RNA synthesis. Plays a role in DNA double-strand break (DSB) repair at the DNA replication fork during DNA replication recovery from DNA damage. Plays a role in the regulation of sister chromatid cohesion and mitotic chromosome segregation. Stimulates 5'-single-stranded DNA flap endonuclease activity of FEN1 in an ATP- and helicase-independent manner. Also plays a role in heterochromatin organization. Involved in rRNA transcription activation through binding to active hypomethylated rDNA gene loci by recruiting UBTF and the RNA polymerase Pol I transcriptional machinery. Plays a role in embryonic development. Associates with chromatin at DNA replication fork regions. Binds to single- and double-stranded DNAs. The protein is ATP-dependent DNA helicase DDX11 of Danio rerio (Zebrafish).